A 547-amino-acid chain; its full sequence is Beta,beta-carotene 15,15'-dioxygenase (547 aa).

Fe cation-binding residues include H172, H237, H308, and H514. Basic and acidic residues predominate over residues 528 to 540; it reads QAASEEQRDRASD. The tract at residues 528–547 is disordered; sequence QAASEEQRDRASDCHGAPLT.

This sequence belongs to the carotenoid oxygenase family. Fe(2+) is required as a cofactor. Highly expressed in retinal pigment epithelium. Also expressed in kidney, testis, liver, brain, small intestine and colon.

The protein resides in the cytoplasm. It is found in the cytosol. The enzyme catalyses all-trans-beta-carotene + O2 = 2 all-trans-retinal. It participates in cofactor metabolism; retinol metabolism. Functionally, symmetrically cleaves beta-carotene into two molecules of retinal using a dioxygenase mechanism. The sequence is that of Beta,beta-carotene 15,15'-dioxygenase from Homo sapiens (Human).